The chain runs to 1028 residues: Receptor-type guanylate cyclase gcy-13 (1028 aa).

Asn-58, Asn-156, Asn-324, Asn-337, Asn-377, and Asn-394 each carry an N-linked (GlcNAc...) asparagine glycan. A helical transmembrane segment spans residues 438 to 458 (IVVIVAVIIVLCCAAAAIAAF). At 459-1028 (LVIKARRDEE…WLLGMKEESA (570 aa)) the chain is on the cytoplasmic side. Residues 491 to 511 (ESHHSSRSLQSNSTTTTGTTG) are disordered. Over residues 497-511 (RSLQSNSTTTTGTTG) the composition is skewed to low complexity. A Protein kinase domain is found at 499 to 770 (LQSNSTTTTG…DMVNKLMKNM (272 aa)). The stretch at 786 to 817 (SVLEKHASSLEDEVQERMKELVEEKKKSDILL) forms a coiled coil. Positions 844-974 (TIFFSDVVGF…DTVNTASRME (131 aa)) constitute a Guanylate cyclase domain.

Belongs to the adenylyl cyclase class-4/guanylyl cyclase family. In terms of tissue distribution, expressed bilaterally in RIM interneurons.

Its subcellular location is the cell membrane. It carries out the reaction GTP = 3',5'-cyclic GMP + diphosphate. In terms of biological role, guanylate cyclase involved in the production of the second messenger cGMP. The chain is Receptor-type guanylate cyclase gcy-13 from Caenorhabditis elegans.